Here is a 244-residue protein sequence, read N- to C-terminus: MWLGDYSLINLLGIFLQATFIQNILLSTFLGMCSYLACSSRLSTANGLGMSVALVLTITGSINWLIHHFVTGPHALSWLSPALANIDLSFLELITFIVVIAAFTQILELLLERFSRNLYLALGIFLPLIAVNCAILGGVLFGITRNYPFLPMVVFSLGSGCGWWLAIVLFATIREKLAYSDIPQHLQGMGISFITTGLIAMAFMGLTGIDISKPTAKSVVISDTSTNKSKTTSAQERLSSNHKA.

6 helical membrane-spanning segments follow: residues 11–31, 47–67, 90–110, 123–143, 153–173, and 189–209; these read LLGI…TFLG, GLGM…WLIH, FLEL…LELL, GIFL…LFGI, VVFS…FATI, and MGIS…LTGI.

The protein belongs to the NqrDE/RnfAE family. As to quaternary structure, composed of six subunits; NqrA, NqrB, NqrC, NqrD, NqrE and NqrF.

It is found in the cell inner membrane. It carries out the reaction a ubiquinone + n Na(+)(in) + NADH + H(+) = a ubiquinol + n Na(+)(out) + NAD(+). Functionally, NQR complex catalyzes the reduction of ubiquinone-1 to ubiquinol by two successive reactions, coupled with the transport of Na(+) ions from the cytoplasm to the periplasm. NqrA to NqrE are probably involved in the second step, the conversion of ubisemiquinone to ubiquinol. This is Na(+)-translocating NADH-quinone reductase subunit E from Chlamydia muridarum (strain MoPn / Nigg).